Consider the following 391-residue polypeptide: S-adenosylmethionine synthase (391 aa).

His-14 is a binding site for ATP. Asp-16 is a Mg(2+) binding site. Glu-42 contributes to the K(+) binding site. L-methionine is bound by residues Glu-55 and Gln-98. The interval 98 to 108 (QSVDIAMGVDE) is flexible loop. Residues 172–174 (DGK), 238–239 (RF), Asp-247, 253–254 (RK), Ala-270, and Lys-274 contribute to the ATP site. Asp-247 serves as a coordination point for L-methionine. Position 278 (Lys-278) interacts with L-methionine.

Belongs to the AdoMet synthase family. In terms of assembly, homotetramer; dimer of dimers. Mg(2+) is required as a cofactor. The cofactor is K(+).

It is found in the cytoplasm. It carries out the reaction L-methionine + ATP + H2O = S-adenosyl-L-methionine + phosphate + diphosphate. Its pathway is amino-acid biosynthesis; S-adenosyl-L-methionine biosynthesis; S-adenosyl-L-methionine from L-methionine: step 1/1. In terms of biological role, catalyzes the formation of S-adenosylmethionine (AdoMet) from methionine and ATP. The overall synthetic reaction is composed of two sequential steps, AdoMet formation and the subsequent tripolyphosphate hydrolysis which occurs prior to release of AdoMet from the enzyme. This Clostridium botulinum (strain Hall / ATCC 3502 / NCTC 13319 / Type A) protein is S-adenosylmethionine synthase.